We begin with the raw amino-acid sequence, 288 residues long: Pyruvate synthase subunit PorB (288 aa).

The [4Fe-4S] cluster site is built by C16, C19, and C44. Over residues 137-148 the composition is skewed to polar residues; that stretch reads STPYGASTTTSP. The interval 137 to 159 is disordered; sequence STPYGASTTTSPHGKESFGEDRP. Over residues 149–159 the composition is skewed to basic and acidic residues; sequence HGKESFGEDRP. Residue C208 participates in [4Fe-4S] cluster binding.

Heterotetramer of one alpha, one beta, one delta and one gamma chain. Requires [4Fe-4S] cluster as cofactor.

It catalyses the reaction 2 oxidized [2Fe-2S]-[ferredoxin] + pyruvate + CoA = 2 reduced [2Fe-2S]-[ferredoxin] + acetyl-CoA + CO2 + H(+). The polypeptide is Pyruvate synthase subunit PorB (porB) (Methanothermobacter marburgensis (strain ATCC BAA-927 / DSM 2133 / JCM 14651 / NBRC 100331 / OCM 82 / Marburg) (Methanobacterium thermoautotrophicum)).